Consider the following 546-residue polypeptide: Chaperonin GroEL 1 (546 aa).

Residues 30–33, K51, 87–91, G415, 479–481, and D495 each bind ATP; these read TLGP, DGTTT, and NAA.

It belongs to the chaperonin (HSP60) family. As to quaternary structure, forms a cylinder of 14 subunits composed of two heptameric rings stacked back-to-back. Interacts with the co-chaperonin GroES.

It localises to the cytoplasm. It carries out the reaction ATP + H2O + a folded polypeptide = ADP + phosphate + an unfolded polypeptide.. Together with its co-chaperonin GroES, plays an essential role in assisting protein folding. The GroEL-GroES system forms a nano-cage that allows encapsulation of the non-native substrate proteins and provides a physical environment optimized to promote and accelerate protein folding. In Paraburkholderia xenovorans (strain LB400), this protein is Chaperonin GroEL 1.